The primary structure comprises 147 residues: TRAF-interacting protein with FHA domain-containing protein B (147 aa).

The 73-residue stretch at 36 to 108 (LLVGRGQDTH…LHSVNRISFS (73 aa)) folds into the FHA domain.

Interacts with TIFA.

Its function is as follows. Inhibits TIFA-mediated TRAF6 activation possibly by inducing a conformational change in TIFA. The chain is TRAF-interacting protein with FHA domain-containing protein B from Rattus norvegicus (Rat).